Reading from the N-terminus, the 272-residue chain is HMP-PP phosphatase (272 aa).

The active-site Nucleophile is the D8. Positions 8, 10, and 212 each coordinate Mg(2+).

Belongs to the HAD-like hydrolase superfamily. Cof family. Mg(2+) is required as a cofactor.

The enzyme catalyses 4-amino-2-methyl-5-(diphosphooxymethyl)pyrimidine + H2O = 4-amino-2-methyl-5-(phosphooxymethyl)pyrimidine + phosphate + H(+). Catalyzes the hydrolysis of 4-amino-2-methyl-5-hydroxymethylpyrimidine pyrophosphate (HMP-PP) to 4-amino-2-methyl-5-hydroxymethylpyrimidine phosphate (HMP-P). The protein is HMP-PP phosphatase of Enterobacter sp. (strain 638).